A 452-amino-acid polypeptide reads, in one-letter code: Phosphoglucosamine mutase (452 aa).

The Phosphoserine intermediate role is filled by serine 101. Residues serine 101, aspartate 241, aspartate 243, and aspartate 245 each contribute to the Mg(2+) site. Serine 101 carries the post-translational modification Phosphoserine.

It belongs to the phosphohexose mutase family. Mg(2+) is required as a cofactor. Post-translationally, activated by phosphorylation.

The catalysed reaction is alpha-D-glucosamine 1-phosphate = D-glucosamine 6-phosphate. Functionally, catalyzes the conversion of glucosamine-6-phosphate to glucosamine-1-phosphate. This Lactococcus lactis subsp. lactis (strain IL1403) (Streptococcus lactis) protein is Phosphoglucosamine mutase.